Reading from the N-terminus, the 61-residue chain is Small ribosomal subunit protein uS14 (61 aa).

The Zn(2+) site is built by cysteine 24, cysteine 27, cysteine 40, and cysteine 43.

This sequence belongs to the universal ribosomal protein uS14 family. Zinc-binding uS14 subfamily. As to quaternary structure, part of the 30S ribosomal subunit. Contacts proteins S3 and S10. Requires Zn(2+) as cofactor.

In terms of biological role, binds 16S rRNA, required for the assembly of 30S particles and may also be responsible for determining the conformation of the 16S rRNA at the A site. In Campylobacter jejuni subsp. jejuni serotype O:6 (strain 81116 / NCTC 11828), this protein is Small ribosomal subunit protein uS14.